Here is a 70-residue protein sequence, read N- to C-terminus: Basic phospholipase A2 2 (70 aa).

A disulfide bond links C28 and C44. H47 is an active-site residue. Position 48 (D48) interacts with Ca(2+).

The protein belongs to the phospholipase A2 family. Group II subfamily. D49 sub-subfamily. Requires Ca(2+) as cofactor. In terms of tissue distribution, expressed by the venom gland.

It is found in the secreted. The catalysed reaction is a 1,2-diacyl-sn-glycero-3-phosphocholine + H2O = a 1-acyl-sn-glycero-3-phosphocholine + a fatty acid + H(+). Its function is as follows. Snake venom phospholipase A2 (PLA2) that exhibits strong myotoxicity. PLA2 catalyzes the calcium-dependent hydrolysis of the 2-acyl groups in 3-sn-phosphoglycerides. This chain is Basic phospholipase A2 2, found in Trimeresurus stejnegeri (Chinese green tree viper).